A 112-amino-acid polypeptide reads, in one-letter code: S-adenosylmethionine decarboxylase proenzyme (112 aa).

Residue S62 is the Schiff-base intermediate with substrate; via pyruvic acid of the active site. S62 carries the post-translational modification Pyruvic acid (Ser); by autocatalysis. The active-site Proton acceptor; for processing activity is H67. The active-site Proton donor; for catalytic activity is C82.

Belongs to the prokaryotic AdoMetDC family. Type 1 subfamily. As to quaternary structure, heterotetramer of two alpha and two beta chains arranged as a dimer of alpha/beta heterodimers. It depends on pyruvate as a cofactor. Post-translationally, is synthesized initially as an inactive proenzyme. Formation of the active enzyme involves a self-maturation process in which the active site pyruvoyl group is generated from an internal serine residue via an autocatalytic post-translational modification. Two non-identical subunits are generated from the proenzyme in this reaction, and the pyruvate is formed at the N-terminus of the alpha chain, which is derived from the carboxyl end of the proenzyme. The post-translation cleavage follows an unusual pathway, termed non-hydrolytic serinolysis, in which the side chain hydroxyl group of the serine supplies its oxygen atom to form the C-terminus of the beta chain, while the remainder of the serine residue undergoes an oxidative deamination to produce ammonia and the pyruvoyl group blocking the N-terminus of the alpha chain.

It carries out the reaction S-adenosyl-L-methionine + H(+) = S-adenosyl 3-(methylsulfanyl)propylamine + CO2. It participates in amine and polyamine biosynthesis; S-adenosylmethioninamine biosynthesis; S-adenosylmethioninamine from S-adenosyl-L-methionine: step 1/1. In terms of biological role, catalyzes the decarboxylation of S-adenosylmethionine to S-adenosylmethioninamine (dcAdoMet), the propylamine donor required for the synthesis of the polyamines spermine and spermidine from the diamine putrescine. The chain is S-adenosylmethionine decarboxylase proenzyme from Archaeoglobus fulgidus (strain ATCC 49558 / DSM 4304 / JCM 9628 / NBRC 100126 / VC-16).